The primary structure comprises 166 residues: Endoribonuclease YbeY (166 aa).

Zn(2+)-binding residues include His-132, His-136, and His-142.

This sequence belongs to the endoribonuclease YbeY family. Zn(2+) is required as a cofactor.

It localises to the cytoplasm. Functionally, single strand-specific metallo-endoribonuclease involved in late-stage 70S ribosome quality control and in maturation of the 3' terminus of the 16S rRNA. This is Endoribonuclease YbeY from Clostridium botulinum (strain Alaska E43 / Type E3).